The primary structure comprises 550 residues: Carboxylesterase 4A (550 aa).

Positions Met1 to Gly20 are cleaved as a signal peptide. Cys88 and Cys116 form a disulfide bridge. Ser221 functions as the Acyl-ester intermediate in the catalytic mechanism. Cys273 and Cys284 form a disulfide bridge. An N-linked (GlcNAc...) asparagine glycan is attached at Asn276. Glu353 serves as the catalytic Charge relay system. Asn386 carries N-linked (GlcNAc...) asparagine glycosylation. Residue His465 is the Charge relay system of the active site.

The protein belongs to the type-B carboxylesterase/lipase family.

It localises to the secreted. Its function is as follows. Probable carboxylesterase. The chain is Carboxylesterase 4A (CES4A) from Bos taurus (Bovine).